Consider the following 1563-residue polypeptide: MAESSSNPTRINILGKDNIIIDHGIWLNFVAQDLLQNIKSSTYILITDTNLYATYVPSFQSVFEKAAPQDVRLLTYAIPPGEYSKGRDTKAEIEDWMLSHQCTRDTVIIALGGGVIGDMIGYVAATFMRGVRFVQVPTTLLAMVDSSIGGKTAIDVPMGKNLIGAFWQPERIYIDLTFLNTLPVREFINGMAEVIKTAAIWDESEFTTLEENAKAILEAVRSKNKSADRLAPIRDILKRIVLGSARVKAEVVSSDEREGGLRNLLNFGHSIGHAYEAILTPQVLHGEAVAIGMVKEAELARFLGVLKPSAVARLTKCIASYDLPTSLQDKRIVKLTAGKECPVDVLLQKMAVDKKNEGRKKKIVLLSAIGKTYEPKASVVEDRAIRIVLTPCIRVHAGVPKDLKVSVTPPGSKSISNRALTLAALGEGTTRIYNLLHSDDTQVMLNAVAQLQGASFSWEDSDVLVVKGNGGRLQATSTPLYLGNAGTASRFLTSVVALCNPTDVNSTVLTGNARMKQRPIGALVDALRANGVGVKYLEKEHSLPVQVDAAGGLAGGVMELAATISSQYVSSLLMAAPYAREPVTLRLVGGKPISQPYIDMTIAMMASFGVQVQRSAEDPNTYHIPQGTYKNPETYIVESDASSATYPLAVAAITGTTCTVPNIGSKSLQGDARFAIEVLRPMGCTVEQTDASTTVTGPPVGTLKAIPHVDMEPMTDAFLTASVLAAVASGTTQITGIANQRVKECNRIKAMKDELAKFGVTCNELEDGIEVTGIPYTELKNPTEGIYCYDDHRVAMSFGVLSTISPHPVLILERECTGKTWPGWWDTMSNYFKSHLEGEEEPHSSHVSHEKPRKGNPKSIFIIGMRGAGKSTAGKWMSEVLNRPLIDLDHELERREGQTIPEIIRSERGWEGFRKAELDLLEDVIKNNPTGHIFSCGGGIVESEAARKLLISYSQNGGIVLLVHRDTDQVVEYLMRDKTRPAYSENIREVYYRRKPWFEECSNFRYYSPHPDGSKALTEPPFDFSQFLSVICGHSNHLEEAKKKPQSSFVSLTVPNVSKALDIIPKVVVGSDAVELRVDLLEDYDPEFVAKQVALLRSAARIPIVYTVRTVSQGGKFPDDDYALALKLYRTGLQAGVEYLDLEMTMPDEVIEAVTNEKGYTHIIASHHDPKATLSWKNGGWIQYYNKALQHGDVVKLVGVARELSDNFALARFKASLAAAHDKPFIGLNMGTAGKLSRVLNGFLTPVSHPALPSKAAPGQLSAAEIRQALALIGELEPRSFYLFGKPISASRSPALHNALFRDNGLPHQYSLFETDNAADVKELIRATDFGGASVTIPLKLDIMPLLDEVSDAAKVIGAVNTIIPVGSGDKVTLRGDNTDWMGMVYALRNAGVVKVSKESPAAGMVVGSGGTTRAAVYALHDLGFAPIYVVARNADRIKALAESFPADYDIRSLSTPEEVAAESTAQPSVVISTIPADKPIEQSMREVLVASLRHPSVTNGKHVLLEMAYTPRHTPLMQLAEDAHWQTIPGLEVLAAQGWYQFQLWTGITPIYTDAQAAVMGN.

Residues 1–382 (MAESSSNPTR…YEPKASVVED (382 aa)) are 3-dehydroquinate synthase. Residues 48-50 (DTN), 82-85 (EYSK), 113-115 (GGV), and D118 contribute to the NAD(+) site. R129 is a 7-phospho-2-dehydro-3-deoxy-D-arabino-heptonate binding site. 138 to 139 (TT) is an NAD(+) binding site. Residues D145 and K151 each coordinate 7-phospho-2-dehydro-3-deoxy-D-arabino-heptonate. Position 160 (K160) interacts with NAD(+). N161 contacts 7-phospho-2-dehydro-3-deoxy-D-arabino-heptonate. NAD(+) contacts are provided by residues 178–181 (FLNT) and N189. Position 193 (E193) interacts with Zn(2+). 7-phospho-2-dehydro-3-deoxy-D-arabino-heptonate-binding positions include 193–196 (EVIK) and K248. E258 acts as the Proton acceptor; for 3-dehydroquinate synthase activity in catalysis. Residues 262–266 (RNLLN) and H269 each bind 7-phospho-2-dehydro-3-deoxy-D-arabino-heptonate. A Zn(2+)-binding site is contributed by H269. Catalysis depends on H273, which acts as the Proton acceptor; for 3-dehydroquinate synthase activity. 7-phospho-2-dehydro-3-deoxy-D-arabino-heptonate is bound by residues H285 and K354. H285 is a Zn(2+) binding site. The EPSP synthase stretch occupies residues 395–834 (VHAGVPKDLK…WDTMSNYFKS (440 aa)). The active-site For EPSP synthase activity is C816. Basic and acidic residues predominate over residues 836–850 (LEGEEEPHSSHVSHE). The segment at 836–857 (LEGEEEPHSSHVSHEKPRKGNP) is disordered. The segment at 857–1051 (PKSIFIIGMR…KKKPQSSFVS (195 aa)) is shikimate kinase. An ATP-binding site is contributed by 864–871 (GMRGAGKS). A 3-dehydroquinase region spans residues 1052–1265 (LTVPNVSKAL…AAPGQLSAAE (214 aa)). H1168 (proton acceptor; for 3-dehydroquinate dehydratase activity) is an active-site residue. The active-site Schiff-base intermediate with substrate; for 3-dehydroquinate dehydratase activity is K1196. Positions 1278 to 1563 (PRSFYLFGKP…TDAQAAVMGN (286 aa)) are shikimate dehydrogenase.

It in the N-terminal section; belongs to the sugar phosphate cyclases superfamily. Dehydroquinate synthase family. This sequence in the 2nd section; belongs to the EPSP synthase family. In the 3rd section; belongs to the shikimate kinase family. The protein in the 4th section; belongs to the type-I 3-dehydroquinase family. It in the C-terminal section; belongs to the shikimate dehydrogenase family. In terms of assembly, homodimer. Zn(2+) is required as a cofactor.

It is found in the cytoplasm. The catalysed reaction is 7-phospho-2-dehydro-3-deoxy-D-arabino-heptonate = 3-dehydroquinate + phosphate. It carries out the reaction 3-dehydroquinate = 3-dehydroshikimate + H2O. The enzyme catalyses shikimate + NADP(+) = 3-dehydroshikimate + NADPH + H(+). It catalyses the reaction shikimate + ATP = 3-phosphoshikimate + ADP + H(+). The catalysed reaction is 3-phosphoshikimate + phosphoenolpyruvate = 5-O-(1-carboxyvinyl)-3-phosphoshikimate + phosphate. The protein operates within metabolic intermediate biosynthesis; chorismate biosynthesis; chorismate from D-erythrose 4-phosphate and phosphoenolpyruvate: step 2/7. Its pathway is metabolic intermediate biosynthesis; chorismate biosynthesis; chorismate from D-erythrose 4-phosphate and phosphoenolpyruvate: step 3/7. It participates in metabolic intermediate biosynthesis; chorismate biosynthesis; chorismate from D-erythrose 4-phosphate and phosphoenolpyruvate: step 4/7. It functions in the pathway metabolic intermediate biosynthesis; chorismate biosynthesis; chorismate from D-erythrose 4-phosphate and phosphoenolpyruvate: step 5/7. The protein operates within metabolic intermediate biosynthesis; chorismate biosynthesis; chorismate from D-erythrose 4-phosphate and phosphoenolpyruvate: step 6/7. Functionally, the AROM polypeptide catalyzes 5 consecutive enzymatic reactions in prechorismate polyaromatic amino acid biosynthesis. In Sordaria macrospora (strain ATCC MYA-333 / DSM 997 / K(L3346) / K-hell), this protein is Pentafunctional AROM polypeptide.